The sequence spans 688 residues: Lipase (688 aa).

An N-terminal signal peptide occupies residues 1–35; that stretch reads MKTRQNKYSIRKFSVGASSILIAALLFMGGGSAQA. The tract at residues 31-309 is disordered; the sequence is GSAQAAEQQQ…KSAKQKQYKN (279 aa). The propeptide at 36–302 is removed in mature form; sequence AEQQQDKGTV…KNEDQTNKSA (267 aa). Over residues 45–54 the composition is skewed to polar residues; sequence VENSTTQSIG. The segment covering 68–79 has biased composition (low complexity); sequence NKNVNEKSNVNS. 2 stretches are compositionally biased toward basic and acidic residues: residues 84 to 95 and 103 to 143; these read ESLHNETPKNED and SQND…KHAS. Over residues 144-172 the composition is skewed to polar residues; it reads ENNQTLHSKAAQSNEDVKTKPSQLDNTAA. Residues 173–183 show a composition bias toward basic and acidic residues; it reads KQEDSQKENLS. The segment covering 184–211 has biased composition (polar residues); sequence KQDTQSSKTTDLLRATAQNQSKDSQSTE. Over residues 240–267 the composition is skewed to basic and acidic residues; sequence SKEEPLKVDKQANPTTDKDKSSKNDKGS. The span at 274–289 shows a compositional bias: polar residues; the sequence is LESNAVATTNKQSKQQ. S418 functions as the Nucleophile in the catalytic mechanism. D609 (charge relay system) is an active-site residue. Residue D647 coordinates Ca(2+). H648 serves as the catalytic Charge relay system. D650, D655, and D658 together coordinate Ca(2+).

Belongs to the AB hydrolase superfamily. Lipase family.

It is found in the secreted. It carries out the reaction a triacylglycerol + H2O = a diacylglycerol + a fatty acid + H(+). This chain is Lipase (lip), found in Staphylococcus epidermidis (strain ATCC 12228 / FDA PCI 1200).